Here is a 235-residue protein sequence, read N- to C-terminus: Hydroxyacylglutathione hydrolase (235 aa).

Zn(2+) contacts are provided by His53, His55, Asp57, His58, His109, Asp127, and His165.

Belongs to the metallo-beta-lactamase superfamily. Glyoxalase II family. Monomer. Zn(2+) is required as a cofactor.

The enzyme catalyses an S-(2-hydroxyacyl)glutathione + H2O = a 2-hydroxy carboxylate + glutathione + H(+). Its pathway is secondary metabolite metabolism; methylglyoxal degradation; (R)-lactate from methylglyoxal: step 2/2. Thiolesterase that catalyzes the hydrolysis of S-D-lactoyl-glutathione to form glutathione and D-lactic acid. This is Hydroxyacylglutathione hydrolase from Actinobacillus pleuropneumoniae serotype 7 (strain AP76).